Reading from the N-terminus, the 223-residue chain is Probable iron-sulfur cluster repair protein HI_1677 (223 aa).

Belongs to the RIC family.

It localises to the cytoplasm. Its function is as follows. Di-iron-containing protein involved in the repair of iron-sulfur clusters. This Haemophilus influenzae (strain ATCC 51907 / DSM 11121 / KW20 / Rd) protein is Probable iron-sulfur cluster repair protein HI_1677.